The chain runs to 247 residues: tRNA (guanine-N(7)-)-methyltransferase (247 aa).

S-adenosyl-L-methionine-binding positions include Gly-70, 93–94, 128–129, and Leu-148; these read EI and NA. Residue Asp-151 is part of the active site. 226–228 is an S-adenosyl-L-methionine binding site; the sequence is SEE.

It belongs to the class I-like SAM-binding methyltransferase superfamily. TrmB family.

It is found in the nucleus. It catalyses the reaction guanosine(46) in tRNA + S-adenosyl-L-methionine = N(7)-methylguanosine(46) in tRNA + S-adenosyl-L-homocysteine. It functions in the pathway tRNA modification; N(7)-methylguanine-tRNA biosynthesis. Catalyzes the formation of N(7)-methylguanine at position 46 (m7G46) in tRNA. This Drosophila persimilis (Fruit fly) protein is tRNA (guanine-N(7)-)-methyltransferase.